The sequence spans 511 residues: Ribose import ATP-binding protein RbsA (511 aa).

2 ABC transporter domains span residues 9–245 and 261–506; these read FEAK…VGRD and LRAE…LPRR. 41-48 contacts ATP; that stretch reads GENGAGKS.

Belongs to the ABC transporter superfamily. Ribose importer (TC 3.A.1.2.1) family. As to quaternary structure, the complex is composed of an ATP-binding protein (RbsA), two transmembrane proteins (RbsC) and a solute-binding protein (RbsB).

Its subcellular location is the cell inner membrane. It catalyses the reaction D-ribose(out) + ATP + H2O = D-ribose(in) + ADP + phosphate + H(+). Functionally, part of the ABC transporter complex RbsABC involved in ribose import. Responsible for energy coupling to the transport system. This Rhodopirellula baltica (strain DSM 10527 / NCIMB 13988 / SH1) protein is Ribose import ATP-binding protein RbsA.